We begin with the raw amino-acid sequence, 304 residues long: MAVTKELLQMDLYALLGIEEKAADKEVKKAYRQKALSCHPDKNPDNPRAAELFHQLSQALEVLTDAAARAAYDKVRKAKKQAAERTQKLDEKRKKVKLDLEARERQAQAQESEEEEESRSTRTLEQEIERLREEGSRQLEEQQRLIREQIRQERDQRLRGKAENTEGQGTPKLKLKWKCKKEDESKGGYSKDVLLRLLQKYGEVLNLVLSSKKPGTAVVEFATVKAAELAVQNEVGLVDNPLKISWLEGQPQDAVGRSHSGLSKGSVLSERDYESLVMMRMRQAAERQQLIARMQQEDQEGPPT.

Residues 11–76 enclose the J domain; it reads DLYALLGIEE…AARAAYDKVR (66 aa). The segment covering 79 to 106 has biased composition (basic and acidic residues); sequence KKQAAERTQKLDEKRKKVKLDLEARERQ. Positions 79–145 are disordered; it reads KKQAAERTQK…SRQLEEQQRL (67 aa). S112 bears the Phosphoserine mark. A compositionally biased stretch (basic and acidic residues) spans 118 to 145; it reads SRSTRTLEQEIERLREEGSRQLEEQQRL. The RRM domain occupies 178–249; that stretch reads KCKKEDESKG…NPLKISWLEG (72 aa). K264 carries the post-translational modification N6-methyllysine.

The protein localises to the cytoplasm. The protein resides in the nucleus. Its function is as follows. May negatively affect PAX8-induced thyroglobulin/TG transcription. The chain is DnaJ homolog subfamily C member 17 (DNAJC17) from Homo sapiens (Human).